The chain runs to 118 residues: Putative pterin-4-alpha-carbinolamine dehydratase (118 aa).

It belongs to the pterin-4-alpha-carbinolamine dehydratase family.

The enzyme catalyses (4aS,6R)-4a-hydroxy-L-erythro-5,6,7,8-tetrahydrobiopterin = (6R)-L-erythro-6,7-dihydrobiopterin + H2O. The chain is Putative pterin-4-alpha-carbinolamine dehydratase from Xanthomonas campestris pv. campestris (strain B100).